The following is a 214-amino-acid chain: rRNA methyltransferase 2, mitochondrial (214 aa).

The N-terminal 18 residues, 1-18, are a transit peptide targeting the mitochondrion; that stretch reads MFSTKKSQGNLHKYIQRQ. Residues 63 to 66, Asp83, 100 to 101, and Asp125 each bind S-adenosyl-L-methionine; these read PGSW and DI. Residue Lys169 is the Proton acceptor of the active site.

The protein belongs to the class I-like SAM-binding methyltransferase superfamily. RNA methyltransferase RlmE family.

The protein localises to the mitochondrion. It catalyses the reaction a uridine in rRNA + S-adenosyl-L-methionine = a 2'-O-methyluridine in rRNA + S-adenosyl-L-homocysteine + H(+). Its function is as follows. S-adenosyl-L-methionine-dependent 2'-O-ribose methyltransferase that catalyzes the formation of 2'-O-methyluridine at position 808 (Um808) in the mitochondrial large subunit ribosomal RNA (mtLSU rRNA), a universally conserved modification in the peptidyl transferase domain of the mtLSU rRNA. This activity may require prior 2'-O-methylguanosine modification at position 809 (Gm809) by MRM3. Essential for late-stage assembly of mtLSU required for efficient translation of mitochondrial DNA encoded proteins; methyltransferase activity is not required for this function. Essential for mitochondrial respiratory function. The sequence is that of rRNA methyltransferase 2, mitochondrial from Caenorhabditis elegans.